We begin with the raw amino-acid sequence, 352 residues long: Small glutamine-rich tetratricopeptide repeat-containing protein 2 (352 aa).

The span at 80–97 shows a compositional bias: low complexity; the sequence is PAAASSSSTAPAAAAATP. Positions 80–103 are disordered; it reads PAAASSSSTAPAAAAATPSDEDLA. TPR repeat units lie at residues 105 to 138, 140 to 172, and 173 to 206; these read AEQL…NPNS, VYFS…DPKF, and GKAY…DPSN. The disordered stretch occupies residues 217-236; it reads KEQLSSSSSSNANDATASRG.

Belongs to the SGT family.

Its function is as follows. Co-chaperone that binds to the molecular chaperone Hsp70 and regulates Hsp70 ATPase activity. The chain is Small glutamine-rich tetratricopeptide repeat-containing protein 2 from Mycosarcoma maydis (Corn smut fungus).